The chain runs to 136 residues: Small ribosomal subunit protein uS8 (136 aa).

The protein belongs to the universal ribosomal protein uS8 family. In terms of assembly, part of the 30S ribosomal subunit. Contacts proteins S5 and S12.

Functionally, one of the primary rRNA binding proteins, it binds directly to 16S rRNA central domain where it helps coordinate assembly of the platform of the 30S subunit. This is Small ribosomal subunit protein uS8 from Synechococcus sp. (strain JA-2-3B'a(2-13)) (Cyanobacteria bacterium Yellowstone B-Prime).